We begin with the raw amino-acid sequence, 444 residues long: Phosphoglucosamine mutase (444 aa).

Catalysis depends on Ser102, which acts as the Phosphoserine intermediate. Ser102, Asp241, Asp243, and Asp245 together coordinate Mg(2+). Ser102 is modified (phosphoserine).

Belongs to the phosphohexose mutase family. Mg(2+) serves as cofactor. In terms of processing, activated by phosphorylation.

It catalyses the reaction alpha-D-glucosamine 1-phosphate = D-glucosamine 6-phosphate. Functionally, catalyzes the conversion of glucosamine-6-phosphate to glucosamine-1-phosphate. The chain is Phosphoglucosamine mutase from Actinobacillus succinogenes (strain ATCC 55618 / DSM 22257 / CCUG 43843 / 130Z).